The following is a 458-amino-acid chain: Adenylosuccinate synthetase (458 aa).

GTP-binding positions include 17-23 (GDEGKGK) and 45-47 (GHT). Catalysis depends on Asp18, which acts as the Proton acceptor. Mg(2+) is bound by residues Asp18 and Gly45. IMP contacts are provided by residues 18-21 (DEGK), 43-46 (NAGH), Thr137, Arg151, Gln247, Thr262, and Arg330. The active-site Proton donor is the His46. Residue 326-332 (VTTGRSR) participates in substrate binding. GTP-binding positions include Arg332, 358 to 360 (KLD), and 440 to 442 (STS).

The protein belongs to the adenylosuccinate synthetase family. In terms of assembly, homodimer. Mg(2+) is required as a cofactor.

It is found in the cytoplasm. It carries out the reaction IMP + L-aspartate + GTP = N(6)-(1,2-dicarboxyethyl)-AMP + GDP + phosphate + 2 H(+). It functions in the pathway purine metabolism; AMP biosynthesis via de novo pathway; AMP from IMP: step 1/2. In terms of biological role, plays an important role in the de novo pathway of purine nucleotide biosynthesis. Catalyzes the first committed step in the biosynthesis of AMP from IMP. The protein is Adenylosuccinate synthetase of Acidovorax sp. (strain JS42).